Here is a 434-residue protein sequence, read N- to C-terminus: Protein trichome birefringence-like 3 (434 aa).

Residues 15–35 (IPLSIIVLVLCGFMFFILLYT) traverse the membrane as a helical; Signal-anchor for type II membrane protein segment. The GDS motif motif lies at 166 to 168 (GDS). The DCXHWCLPGXXDXWN motif signature appears at 413-427 (DCIHWCLPGLPDTWN).

Belongs to the PC-esterase family. TBL subfamily.

The protein localises to the golgi apparatus membrane. Involved in secondary cell wall cellulose deposition. Required for normal stem development. May act as a bridging protein that binds pectin and other cell wall polysaccharides. Probably involved in maintaining esterification of pectins. May be involved in the specific O-acetylation of cell wall polymers. The sequence is that of Protein trichome birefringence-like 3 (TBL3) from Arabidopsis thaliana (Mouse-ear cress).